Here is a 223-residue protein sequence, read N- to C-terminus: V-type ATP synthase subunit D (223 aa).

Residues 203 to 223 are disordered; the sequence is AREAEEEGGRPNPQVEIGAGL.

The protein belongs to the V-ATPase D subunit family.

In terms of biological role, produces ATP from ADP in the presence of a proton gradient across the membrane. This chain is V-type ATP synthase subunit D, found in Thermus thermophilus (strain ATCC BAA-163 / DSM 7039 / HB27).